We begin with the raw amino-acid sequence, 329 residues long: UDP-N-acetylenolpyruvoylglucosamine reductase (329 aa).

An FAD-binding PCMH-type domain is found at 28-192 (RVGGPADLLC…ARVEVRLRPG (165 aa)). Arginine 172 is a catalytic residue. The interval 204–225 (DRERRRATQPLDRPTFGSTFTN) is disordered. Serine 221 functions as the Proton donor in the catalytic mechanism. Glutamate 291 is a catalytic residue. Residues 303-329 (LAGLDGHAADGGGPGAASGGARPREAT) are disordered. Residues 311–320 (ADGGGPGAAS) show a composition bias toward gly residues.

This sequence belongs to the MurB family. It depends on FAD as a cofactor.

Its subcellular location is the cytoplasm. The enzyme catalyses UDP-N-acetyl-alpha-D-muramate + NADP(+) = UDP-N-acetyl-3-O-(1-carboxyvinyl)-alpha-D-glucosamine + NADPH + H(+). The protein operates within cell wall biogenesis; peptidoglycan biosynthesis. Cell wall formation. This Anaeromyxobacter dehalogenans (strain 2CP-C) protein is UDP-N-acetylenolpyruvoylglucosamine reductase.